Here is a 310-residue protein sequence, read N- to C-terminus: N-acetyl-gamma-glutamyl-phosphate reductase (310 aa).

The active site involves Cys117.

It belongs to the NAGSA dehydrogenase family. Type 2 subfamily.

It localises to the cytoplasm. The catalysed reaction is N-acetyl-L-glutamate 5-semialdehyde + phosphate + NADP(+) = N-acetyl-L-glutamyl 5-phosphate + NADPH + H(+). It participates in amino-acid biosynthesis; L-arginine biosynthesis; N(2)-acetyl-L-ornithine from L-glutamate: step 3/4. In terms of biological role, catalyzes the NADPH-dependent reduction of N-acetyl-5-glutamyl phosphate to yield N-acetyl-L-glutamate 5-semialdehyde. This chain is N-acetyl-gamma-glutamyl-phosphate reductase, found in Brucella abortus (strain S19).